The sequence spans 829 residues: Periplasmic nitrate reductase (829 aa).

Residues 1 to 36 constitute a signal peptide (tat-type signal); that stretch reads MARRDFIKQTAAAAAATVAGVPLTGYTQNIVTESEA. The 57-residue stretch at 39 to 95 folds into the 4Fe-4S Mo/W bis-MGD-type domain; the sequence is LKWSKAPCRFCGTGCGVNVAVKDNQVVATHGDFNAEVNKGLNCVKGYFLSKIMYGSD. The [4Fe-4S] cluster site is built by cysteine 46, cysteine 49, cysteine 53, and cysteine 81. Residues lysine 83, glutamine 150, asparagine 175, cysteine 179, 212-219, 243-247, 262-264, methionine 373, glutamine 377, asparagine 483, 509-510, lysine 532, aspartate 559, and 719-728 contribute to the Mo-bis(molybdopterin guanine dinucleotide) site; these read WGSNMAEM, STFEH, QSD, SD, and TGRVLEHWHS. Tryptophan 795 provides a ligand contact to substrate. Residues asparagine 803 and lysine 820 each coordinate Mo-bis(molybdopterin guanine dinucleotide).

Belongs to the prokaryotic molybdopterin-containing oxidoreductase family. NasA/NapA/NarB subfamily. In terms of assembly, component of the periplasmic nitrate reductase NapAB complex composed of NapA and NapB. Requires [4Fe-4S] cluster as cofactor. It depends on Mo-bis(molybdopterin guanine dinucleotide) as a cofactor. Predicted to be exported by the Tat system. The position of the signal peptide cleavage has not been experimentally proven.

The protein localises to the periplasm. The enzyme catalyses 2 Fe(II)-[cytochrome] + nitrate + 2 H(+) = 2 Fe(III)-[cytochrome] + nitrite + H2O. Functionally, catalytic subunit of the periplasmic nitrate reductase complex NapAB. Receives electrons from NapB and catalyzes the reduction of nitrate to nitrite. This Bordetella bronchiseptica (strain ATCC BAA-588 / NCTC 13252 / RB50) (Alcaligenes bronchisepticus) protein is Periplasmic nitrate reductase.